The following is a 730-amino-acid chain: Transcription factor verF (730 aa).

The C2H2-type 1 zinc finger occupies 19–41; the sequence is YECSLCLKRYKRREHLFRHIGSH. Residues 47–69 form a C2H2-type 2; atypical zinc finger; that stretch reads YQCNSCDGAFQRADVLKRHLRTC. Positions 83–109 form a DNA-binding region, zn(2)-C6 fungal-type; sequence CDRCVRQKKACSSHQPCHSCAKKGAQC. The span at 120 to 129 shows a compositional bias: polar residues; the sequence is RLSQHSSTNH. The interval 120-151 is disordered; it reads RLSQHSSTNHTPKDQELSTQFTNPPPPPSTST.

The protein resides in the nucleus. Functionally, transcription factor; part of the gene cluster that mediates the biosynthesis of the neurotoxin verrucosidin, a methylated alpha-pyrone polyketide that inhibits oxidative phosphorylation in mitochondria and thereby causes neurological diseases. This is Transcription factor verF from Penicillium polonicum.